Reading from the N-terminus, the 473-residue chain is Cysteine--tRNA ligase (473 aa).

Zn(2+) is bound at residue cysteine 28. Positions 30–40 match the 'HIGH' region motif; that stretch reads MTVYDFCHIGH. 3 residues coordinate Zn(2+): cysteine 212, histidine 237, and glutamate 241. Residues 277-281 carry the 'KMSKS' region motif; sequence KMSKS. Lysine 280 is an ATP binding site.

This sequence belongs to the class-I aminoacyl-tRNA synthetase family. Monomer. Requires Zn(2+) as cofactor.

The protein localises to the cytoplasm. The catalysed reaction is tRNA(Cys) + L-cysteine + ATP = L-cysteinyl-tRNA(Cys) + AMP + diphosphate. The chain is Cysteine--tRNA ligase from Polynucleobacter necessarius subsp. necessarius (strain STIR1).